The primary structure comprises 417 residues: Multifunctional CCA protein (417 aa).

Positions 8 and 11 each coordinate ATP. 2 residues coordinate CTP: G8 and R11. Positions 21 and 23 each coordinate Mg(2+). R91, R137, and R140 together coordinate ATP. The CTP site is built by R91, R137, and R140. Residues 225–326 enclose the HD domain; the sequence is SGIHTLMTLQ…LNVLKKTDAF (102 aa).

Belongs to the tRNA nucleotidyltransferase/poly(A) polymerase family. Bacterial CCA-adding enzyme type 1 subfamily. As to quaternary structure, monomer. Can also form homodimers and oligomers. The cofactor is Mg(2+). Ni(2+) is required as a cofactor.

The enzyme catalyses a tRNA precursor + 2 CTP + ATP = a tRNA with a 3' CCA end + 3 diphosphate. The catalysed reaction is a tRNA with a 3' CCA end + 2 CTP + ATP = a tRNA with a 3' CCACCA end + 3 diphosphate. Its function is as follows. Catalyzes the addition and repair of the essential 3'-terminal CCA sequence in tRNAs without using a nucleic acid template. Adds these three nucleotides in the order of C, C, and A to the tRNA nucleotide-73, using CTP and ATP as substrates and producing inorganic pyrophosphate. tRNA 3'-terminal CCA addition is required both for tRNA processing and repair. Also involved in tRNA surveillance by mediating tandem CCA addition to generate a CCACCA at the 3' terminus of unstable tRNAs. While stable tRNAs receive only 3'-terminal CCA, unstable tRNAs are marked with CCACCA and rapidly degraded. This Neisseria meningitidis serogroup B (strain ATCC BAA-335 / MC58) protein is Multifunctional CCA protein.